The chain runs to 651 residues: Probable potassium transport system protein Kup (651 aa).

12 consecutive transmembrane segments (helical) span residues 41-61, 82-102, 130-150, 163-183, 194-214, 235-255, 276-296, 309-329, 366-386, 395-415, 426-446, and 450-470; these read LVLGALGVVYGDIGTSPIYAF, VVSLIFWALTLVVTVKYVLFV, LILGVGICGAALFFGDAVITP, IVAPNLTPFVVPATVVILVTL, VAIVFGPIMALWFVALGASGL, FLTVSPAVAFVTVGAVFLAMT, WLWIVFPCLLLNYFGQAAFIL, MIPSFALWPMVLLATAATVIA, IYIPRVNLLLGLAVVILVLGF, AYGIAVTGNMLVTTVLLYIVM, ALPIILGFLVIDMLFFSANII, and EGGWASIGIATVLVLIMWTWV.

Belongs to the HAK/KUP transporter (TC 2.A.72) family.

It localises to the cell inner membrane. It carries out the reaction K(+)(in) + H(+)(in) = K(+)(out) + H(+)(out). Functionally, transport of potassium into the cell. Likely operates as a K(+):H(+) symporter. The chain is Probable potassium transport system protein Kup from Brucella canis (strain ATCC 23365 / NCTC 10854 / RM-666).